A 136-amino-acid chain; its full sequence is uncharacterized protein (136 aa).

Residues Ala7–Ser27 traverse the membrane as a helical segment.

It is found in the membrane. This is an uncharacterized protein from Mycoplasma pneumoniae (strain ATCC 29342 / M129 / Subtype 1) (Mycoplasmoides pneumoniae).